We begin with the raw amino-acid sequence, 478 residues long: Lactate utilization protein B (478 aa).

4Fe-4S ferredoxin-type domains are found at residues 303–333 (GTEFQSALHCIRCAACINVCPVYRHVGGHAY) and 352–381 (YDDHKELPYASSLCAACTEACPVKIPLHEQ). [4Fe-4S] cluster is bound by residues cysteine 312, cysteine 315, cysteine 318, cysteine 322, cysteine 365, cysteine 368, and cysteine 372.

This sequence belongs to the LutB/YkgF family.

In terms of biological role, is involved in L-lactate degradation and allows cells to grow with lactate as the sole carbon source. Has probably a role as an electron transporter during oxidation of L-lactate. This Oceanobacillus iheyensis (strain DSM 14371 / CIP 107618 / JCM 11309 / KCTC 3954 / HTE831) protein is Lactate utilization protein B.